Here is a 449-residue protein sequence, read N- to C-terminus: Heterogeneous nuclear ribonucleoprotein H2 (449 aa).

Residue Met-1 is modified to N-acetylmethionine. Met-2 carries the N-acetylmethionine; in Heterogeneous nuclear ribonucleoprotein H2, N-terminally processed modification. An RRM 1 domain is found at 11–90; that stretch reads FVVKVRGLPW…RYVEVFKSNS (80 aa). The residue at position 23 (Ser-23) is a Phosphoserine. Residue Lys-35 forms a Glycyl lysine isopeptide (Lys-Gly) (interchain with G-Cter in SUMO2) linkage. Phosphoserine occurs at positions 54 and 63. Lys-87 participates in a covalent cross-link: Glycyl lysine isopeptide (Lys-Gly) (interchain with G-Cter in SUMO2). Ser-90 is subject to Phosphoserine. Lys-98 is covalently cross-linked (Glycyl lysine isopeptide (Lys-Gly) (interchain with G-Cter in SUMO2)). Positions 111 to 188 constitute an RRM 2 domain; it reads GFVRLRGLPF…RYIEIFKSSR (78 aa). Arg-233 carries the post-translational modification Dimethylated arginine; alternate. The residue at position 233 (Arg-233) is an Omega-N-methylarginine; alternate. One copy of the 1-1 repeat lies at 234-249; it reads GAYGGGYGGYDDYGGY. The segment at 234–433 is 2 X 16 AA Gly-rich approximate repeats; the sequence is GAYGGGYGGY…YGGQSSMSGY (200 aa). At Tyr-246 the chain carries Phosphotyrosine. One can recognise an RRM 3 domain in the interval 289 to 364; it reads HCVHMRGLPY…RYVELFLNST (76 aa). Ser-310 is subject to Phosphoserine. A run of 3 repeats spans residues 354–372, 374–392, and 418–433. The interval 354 to 392 is 2 X 19 AA perfect repeats; that stretch reads HRYVELFLNSTAGTSGGAYDHSYVELFLNSTAGASGGAY.

In terms of assembly, component of a ribonucleoprotein complex containing mRNAs and RNA-binding proteins including DDX5, HNRNPH2 and SRSF1 as well as splicing regulator ARVCF. Interacts with TXNL4/DIM1. In terms of tissue distribution, expressed ubiquitously.

It localises to the nucleus. The protein resides in the nucleoplasm. This protein is a component of the heterogeneous nuclear ribonucleoprotein (hnRNP) complexes which provide the substrate for the processing events that pre-mRNAs undergo before becoming functional, translatable mRNAs in the cytoplasm. Binds poly(RG). This Homo sapiens (Human) protein is Heterogeneous nuclear ribonucleoprotein H2 (HNRNPH2).